The following is a 370-amino-acid chain: MPQEEKTLRMDTPPPDEILGKQNENLQNQDEELGFKEMDGLREALANLRGLSEEEKGEKAMLRSRIQEQSQLICILKRRSDEALERCQILELLNSELEEKRLQEMEKLKAQSEHIQKLENHFMILASNHEQMIRFKDAHKSENVKLKEENARLRQENNSLFSQALKDQEAKVLELTTLNKALVEELEVLKQRCAHEASQAQAREEELLGLQNQQACDHAKETEELRSQLQSIKQQHQQATEQMGKEQEANLNLNQELQARLQTVLREKEELLQLSMERGKVLQNKQAEIRQLEEKLETAAMAKKHALERFEQEAVAVDSNLRVRELQRRVDGIQKAYDELRLQSEAFKKHSLDLLSKERELNAKLRHLFP.

Positions 1–21 (MPQEEKTLRMDTPPPDEILGK) are disordered. At Thr-12 the chain carries Phosphothreonine. A coiled-coil region spans residues 36–346 (KEMDGLREAL…YDELRLQSEA (311 aa)).

It belongs to the CCDC89 family. In terms of assembly, interacts with HEY1. As to expression, expression is restricted to the adult testis, where localization is almost exclusive to round spermatids.

The protein resides in the cytoplasm. The protein localises to the nucleus. In Mus musculus (Mouse), this protein is Coiled-coil domain-containing protein 89.